We begin with the raw amino-acid sequence, 194 residues long: Imidazoleglycerol-phosphate dehydratase (194 aa).

It belongs to the imidazoleglycerol-phosphate dehydratase family.

It is found in the cytoplasm. It carries out the reaction D-erythro-1-(imidazol-4-yl)glycerol 3-phosphate = 3-(imidazol-4-yl)-2-oxopropyl phosphate + H2O. Its pathway is amino-acid biosynthesis; L-histidine biosynthesis; L-histidine from 5-phospho-alpha-D-ribose 1-diphosphate: step 6/9. This Clostridium kluyveri (strain NBRC 12016) protein is Imidazoleglycerol-phosphate dehydratase.